The sequence spans 205 residues: MARAKICGLRTRETWLAATDAGADWVGFVFFPRSPRFVTIEALKAIGADARVPRVGLFVDPEPAAIEAVLKVQDLEFLQIYAGAEACRAMRARFGAKVWRAVGVASAADLPRDDEGLDGFLIESKPPRGADRPGGNATAFDWAVMQGWRAPAPWLLAGGLTPANVAAAVRASGAAAVDVSSGVESAPGEKSVPLIRDFVAAAHAA.

It belongs to the TrpF family.

It catalyses the reaction N-(5-phospho-beta-D-ribosyl)anthranilate = 1-(2-carboxyphenylamino)-1-deoxy-D-ribulose 5-phosphate. It functions in the pathway amino-acid biosynthesis; L-tryptophan biosynthesis; L-tryptophan from chorismate: step 3/5. The polypeptide is N-(5'-phosphoribosyl)anthranilate isomerase (Acidiphilium cryptum (strain JF-5)).